The sequence spans 522 residues: Echinocystic acid 23-monooxygenase (522 aa).

A helical; Signal-anchor for type II membrane protein transmembrane segment spans residues 4–24 (LPYIATSIACIVILRWALNMM). N-linked (GlcNAc...) asparagine glycosylation occurs at N190. A heme-binding site is contributed by C470.

Belongs to the cytochrome P450 family. It depends on heme as a cofactor. As to expression, mainly expressed in flowers and flower buds, to a lesser extent in young leaves and, at low levels, in old leaves, stems and roots.

The protein resides in the membrane. Its pathway is secondary metabolite biosynthesis; terpenoid biosynthesis. Its function is as follows. Component of the oleanane-type triterpene saponins (e.g. saponarioside A and saponarioside B) biosynthetic pathway, leading to the production of natural products with detergent properties used as traditional sources of soap. An oxidoreductase that facilitates the oxidation of the methyl group to a carboxyl group at the C-23 position of echinocystic acid, resulting in the formation of quillaic acid (QA). This Saponaria officinalis (Common soapwort) protein is Echinocystic acid 23-monooxygenase.